We begin with the raw amino-acid sequence, 110 residues long: Ig kappa chain V region 2717 (110 aa).

A framework-1 region spans residues 1–23 (VEVLTQTPSPVSAAVGGTVTISC). Residues 24 to 36 (QSTKSIYBBBYLA) form a complementarity-determining-1 region. The segment at 37-51 (WYQZKPGQPPKALIY) is framework-2. The tract at residues 52–58 (TASSLAS) is complementarity-determining-2. Residues 59–90 (GVPSRFTGSGSGTZFTLTLSDVZCDDAATYYC) are framework-3. Positions 91–99 (GGADYTGYS) are complementarity-determining-3. The interval 100 to 109 (FGGGTEVVVK) is framework-4.

This chain is Ig kappa chain V region 2717, found in Oryctolagus cuniculus (Rabbit).